The chain runs to 101 residues: MTEHNHDHDHEGHEHITLVDEQGNETLYEILLTVDGQEEFGKNYVLLYPAGIPEDEDVELQAYSYVENAEGTEGDLQQIETDAEWDMIEEVFNTFMAEEEE.

It belongs to the UPF0473 family.

The sequence is that of UPF0473 protein EF_1204 from Enterococcus faecalis (strain ATCC 700802 / V583).